Consider the following 419-residue polypeptide: Dual specificity protein phosphatase 7 (419 aa).

The segment at 1 to 47 (MKNQLRGPPARAHMSTSGAAAAGGTRAGSEPGAGSGSGAGTGAGAAT) is disordered. Positions 10–29 (ARAHMSTSGAAAAGGTRAGS) are enriched in low complexity. Residues 31–47 (PGAGSGSGAGTGAGAAT) are compositionally biased toward gly residues. The region spanning 68–187 (GGASLLLLDC…FQTEYSEHCE (120 aa)) is the Rhodanese domain. The interval 216–240 (CSDGESDRELPSSATESDGSPVPSS) is disordered. The segment covering 227 to 240 (SSATESDGSPVPSS) has biased composition (polar residues). The Tyrosine-protein phosphatase domain occupies 244 to 387 (FPVQILPYLY…LLDFERTLGL (144 aa)). Cysteine 331 functions as the Phosphocysteine intermediate in the catalytic mechanism. 331 to 337 (CLAGISR) is a binding site for substrate.

Belongs to the protein-tyrosine phosphatase family. Non-receptor class dual specificity subfamily. Interacts with MAPK1/ERK2; the interaction enhances DUSP7 phosphatase activity. In terms of tissue distribution, strongly expressed in liver. Expressed at significantly higher levels in malignant hematopoietic cells than in corresponding non-malignant cells.

It localises to the cytoplasm. It catalyses the reaction O-phospho-L-tyrosyl-[protein] + H2O = L-tyrosyl-[protein] + phosphate. The enzyme catalyses O-phospho-L-seryl-[protein] + H2O = L-seryl-[protein] + phosphate. It carries out the reaction O-phospho-L-threonyl-[protein] + H2O = L-threonyl-[protein] + phosphate. With respect to regulation, strongly inhibited by sodium orthovanadate. Its function is as follows. Dual specificity protein phosphatase. Shows high activity towards MAPK1/ERK2. Also has lower activity towards MAPK14 and MAPK8. In arrested oocytes, plays a role in meiotic resumption. Promotes nuclear envelope breakdown and activation of the CDK1/Cyclin-B complex in oocytes, probably by dephosphorylating and inactivating the conventional protein kinase C (cPKC) isozyme PRKCB. May also inactivate PRKCA and/or PRKCG. Also important in oocytes for normal chromosome alignment on the metaphase plate and progression to anaphase, where it might regulate activity of the spindle-assembly checkpoint (SAC) complex. This is Dual specificity protein phosphatase 7 from Homo sapiens (Human).